The chain runs to 277 residues: Caspase-3 (277 aa).

Met1 carries the post-translational modification N-acetylmethionine. 2 consecutive propeptides follow at residues 1 to 9 (MENTENSVD) and 10 to 28 (AKSFKNAETKILHGSKSMD). Residue Lys11 is modified to N6-acetyllysine. Position 26 is a phosphoserine (Ser26). Residues His121 and Cys163 contribute to the active site. Position 163 is an S-nitrosocysteine; in inhibited form (Cys163).

This sequence belongs to the peptidase C14A family. Heterotetramer that consists of two anti-parallel arranged heterodimers, each one formed by a 17 kDa (p17) and a 12 kDa (p12) subunit. Interacts with BIRC6/bruce. In terms of processing, cleavage by granzyme B, caspase-6, caspase-8 and caspase-10 generates the two active subunits. Additional processing of the propeptides is likely due to the autocatalytic activity of the activated protease. Active heterodimers between the small subunit of caspase-7 protease and the large subunit of caspase-3 also occur and vice versa. S-nitrosylated on its catalytic site cysteine in unstimulated cell lines and denitrosylated upon activation of the Fas apoptotic pathway, associated with an increase in intracellular caspase activity. Fas therefore activates caspase-3 not only by inducing the cleavage of the caspase zymogen to its active subunits, but also by stimulating the denitrosylation of its active site thiol. Post-translationally, ubiquitinated by BIRC6; this activity is inhibited by DIABLO/SMAC.

Its subcellular location is the cytoplasm. The enzyme catalyses Strict requirement for an Asp residue at positions P1 and P4. It has a preferred cleavage sequence of Asp-Xaa-Xaa-Asp-|- with a hydrophobic amino-acid residue at P2 and a hydrophilic amino-acid residue at P3, although Val or Ala are also accepted at this position.. With respect to regulation, inhibited by BIRC6; following inhibition of BIRC6-caspase binding by DIABLO/SMAC, BIRC6 is subjected to caspase cleavage, leading to an increase in active caspases. Involved in the activation cascade of caspases responsible for apoptosis execution. At the onset of apoptosis, it proteolytically cleaves poly(ADP-ribose) polymerase PARP1 at a '216-Asp-|-Gly-217' bond. Cleaves and activates sterol regulatory element binding proteins (SREBPs) between the basic helix-loop-helix leucine zipper domain and the membrane attachment domain. Cleaves and activates caspase-6, -7 and -9 (CASP6, CASP7 and CASP9, respectively). Cleaves and inactivates interleukin-18 (IL18). Triggers cell adhesion in sympathetic neurons through RET cleavage. Cleaves IL-1 beta between an Asp and an Ala, releasing the mature cytokine which is involved in a variety of inflammatory processes. Cleaves and inhibits serine/threonine-protein kinase AKT1 in response to oxidative stress. Acts as an inhibitor of type I interferon production during virus-induced apoptosis by mediating cleavage of antiviral proteins CGAS, IRF3 and MAVS, thereby preventing cytokine overproduction. Also involved in pyroptosis by mediating cleavage and activation of gasdermin-E (GSDME). Cleaves XRCC4 and phospholipid scramblase proteins XKR4, XKR8 and XKR9, leading to promote phosphatidylserine exposure on apoptotic cell surface. Cleaves BIRC6 following inhibition of BIRC6-caspase binding by DIABLO/SMAC. In Canis lupus familiaris (Dog), this protein is Caspase-3 (CASP3).